Consider the following 228-residue polypeptide: Thermonuclease (228 aa).

The first 23 residues, 1–23 (MTEYLLSAGICMAIVSILLIGMA), serve as a signal peptide directing secretion. The propeptide occupies 24–60 (ISNVSKGQYAKRFFFFATSCLVLTLVVVSSLSSSANA). Ca(2+) is bound at residue Asp-100. The active site involves Arg-114. Positions 119 and 120 each coordinate Ca(2+). Active-site residues include Glu-122 and Arg-166.

It belongs to the thermonuclease family. The cofactor is Ca(2+).

It is found in the secreted. The catalysed reaction is Endonucleolytic cleavage to nucleoside 3'-phosphates and 3'-phosphooligonucleotide end-products.. Its function is as follows. Enzyme that catalyzes the hydrolysis of both DNA and RNA at the 5' position of the phosphodiester bond. This Staphylococcus aureus (strain MSSA476) protein is Thermonuclease (nuc).